The chain runs to 88 residues: Sec-independent protein translocase protein TatA (88 aa).

The chain crosses the membrane as a helical span at residues 1–21; that stretch reads MGGISIWQLLIIAVIVVLLFG. The disordered stretch occupies residues 41–88; that stretch reads KAMGDENQKETNNAEKTTNDADFDTKNLAQKTSTEEKSTTESKNKEQV. Composition is skewed to basic and acidic residues over residues 42-65 and 73-88; these read AMGD…DFDT and STEE…KEQV.

It belongs to the TatA/E family. In terms of assembly, the Tat system comprises two distinct complexes: a TatABC complex, containing multiple copies of TatA, TatB and TatC subunits, and a separate TatA complex, containing only TatA subunits. Substrates initially bind to the TatABC complex, which probably triggers association of the separate TatA complex to form the active translocon.

It localises to the cell inner membrane. Its function is as follows. Part of the twin-arginine translocation (Tat) system that transports large folded proteins containing a characteristic twin-arginine motif in their signal peptide across membranes. TatA could form the protein-conducting channel of the Tat system. The sequence is that of Sec-independent protein translocase protein TatA from Proteus mirabilis (strain HI4320).